The chain runs to 176 residues: CDP-archaeol synthase (176 aa).

4 consecutive transmembrane segments (helical) span residues 41 to 61 (GLIGGIVVGIIFGLMQIFLYN), 73 to 93 (IITVCALATGALLGDMVKSYF), 114 to 134 (VVGSLVLMTLALLVTGNLNWF), and 138 to 158 (FDSVGFLIATIIAILILSPLL).

It belongs to the CDP-archaeol synthase family. It depends on Mg(2+) as a cofactor.

The protein localises to the cell membrane. It catalyses the reaction 2,3-bis-O-(geranylgeranyl)-sn-glycerol 1-phosphate + CTP + H(+) = CDP-2,3-bis-O-(geranylgeranyl)-sn-glycerol + diphosphate. It functions in the pathway membrane lipid metabolism; glycerophospholipid metabolism. Functionally, catalyzes the formation of CDP-2,3-bis-(O-geranylgeranyl)-sn-glycerol (CDP-archaeol) from 2,3-bis-(O-geranylgeranyl)-sn-glycerol 1-phosphate (DGGGP) and CTP. This reaction is the third ether-bond-formation step in the biosynthesis of archaeal membrane lipids. In Methanocorpusculum labreanum (strain ATCC 43576 / DSM 4855 / Z), this protein is CDP-archaeol synthase.